Here is a 105-residue protein sequence, read N- to C-terminus: Phosphoribosyl-ATP pyrophosphatase (105 aa).

Belongs to the PRA-PH family.

The protein localises to the cytoplasm. It carries out the reaction 1-(5-phospho-beta-D-ribosyl)-ATP + H2O = 1-(5-phospho-beta-D-ribosyl)-5'-AMP + diphosphate + H(+). It functions in the pathway amino-acid biosynthesis; L-histidine biosynthesis; L-histidine from 5-phospho-alpha-D-ribose 1-diphosphate: step 2/9. The sequence is that of Phosphoribosyl-ATP pyrophosphatase from Vesicomyosocius okutanii subsp. Calyptogena okutanii (strain HA).